Here is a 100-residue protein sequence, read N- to C-terminus: Guanine nucleotide exchange factor MSS4 homolog (100 aa).

The 100-residue stretch at 1–100 (MSNLRIVCQH…YLLLCSLEKN (100 aa)) folds into the MSS4 domain. Zn(2+) contacts are provided by Cys-8, Cys-11, Cys-73, and Cys-76.

It belongs to the DSS4/MSS4 family.

Guanine-nucleotide-releasing protein that acts on members of the sec4/ypt1/rab subfamily. The polypeptide is Guanine nucleotide exchange factor MSS4 homolog (Schizosaccharomyces pombe (strain 972 / ATCC 24843) (Fission yeast)).